Reading from the N-terminus, the 433-residue chain is Bifunctional protein GlmU (433 aa).

The pyrophosphorylase stretch occupies residues 1 to 226; the sequence is MLSVIILAAG…EECFLGVNSQ (226 aa). UDP-N-acetyl-alpha-D-glucosamine is bound by residues 7–10, lysine 21, and 80–81; these read LAAG and GT. Aspartate 106 provides a ligand contact to Mg(2+). UDP-N-acetyl-alpha-D-glucosamine is bound by residues glycine 138, glutamate 152, asparagine 167, and asparagine 224. Asparagine 224 is a Mg(2+) binding site. Residues 227–247 are linker; that stretch reads TERAKAEEIMLERLRKNAMDL. Residues 248 to 433 are N-acetyltransferase; the sequence is GVVMQLPSSI…NGYFKFFKKP (186 aa). Residues arginine 311 and lysine 328 each coordinate UDP-N-acetyl-alpha-D-glucosamine. Histidine 339 (proton acceptor) is an active-site residue. Residues tyrosine 342 and asparagine 353 each coordinate UDP-N-acetyl-alpha-D-glucosamine. Residues alanine 356, 362 to 363, serine 381, serine 399, and arginine 416 each bind acetyl-CoA; that span reads NY.

The protein in the N-terminal section; belongs to the N-acetylglucosamine-1-phosphate uridyltransferase family. It in the C-terminal section; belongs to the transferase hexapeptide repeat family. In terms of assembly, homotrimer. Mg(2+) is required as a cofactor.

The protein localises to the cytoplasm. It catalyses the reaction alpha-D-glucosamine 1-phosphate + acetyl-CoA = N-acetyl-alpha-D-glucosamine 1-phosphate + CoA + H(+). The catalysed reaction is N-acetyl-alpha-D-glucosamine 1-phosphate + UTP + H(+) = UDP-N-acetyl-alpha-D-glucosamine + diphosphate. The protein operates within nucleotide-sugar biosynthesis; UDP-N-acetyl-alpha-D-glucosamine biosynthesis; N-acetyl-alpha-D-glucosamine 1-phosphate from alpha-D-glucosamine 6-phosphate (route II): step 2/2. Its pathway is nucleotide-sugar biosynthesis; UDP-N-acetyl-alpha-D-glucosamine biosynthesis; UDP-N-acetyl-alpha-D-glucosamine from N-acetyl-alpha-D-glucosamine 1-phosphate: step 1/1. It functions in the pathway bacterial outer membrane biogenesis; LPS lipid A biosynthesis. Catalyzes the last two sequential reactions in the de novo biosynthetic pathway for UDP-N-acetylglucosamine (UDP-GlcNAc). The C-terminal domain catalyzes the transfer of acetyl group from acetyl coenzyme A to glucosamine-1-phosphate (GlcN-1-P) to produce N-acetylglucosamine-1-phosphate (GlcNAc-1-P), which is converted into UDP-GlcNAc by the transfer of uridine 5-monophosphate (from uridine 5-triphosphate), a reaction catalyzed by the N-terminal domain. This is Bifunctional protein GlmU from Helicobacter pylori (strain HPAG1).